Reading from the N-terminus, the 262-residue chain is Short-chain reductase protein NovJ (262 aa).

NADP(+) is bound by residues 23–26 (GAGR) and 73–74 (DV). Ser-152 provides a ligand contact to substrate. Residue Tyr-164 is the Proton acceptor of the active site. 164-168 (YATAK) contributes to the NADP(+) binding site.

The protein belongs to the short-chain dehydrogenases/reductases (SDR) family. Heterotetramer; the NovJ(2)K(2) heterotetramer is composed of subunits of 2 NovJ and 2 subunits of NovK.

The protein operates within antibiotic biosynthesis; novobiocin biosynthesis. Catalytic subunit of the NovJ(2)K(2) heterotetramer that catalyzes the NADPH-dependent reduction of the tyrosyl moiety of L-beta-OH-Tyr-S-NovH intermediate to yield the tethered beta-ketotyrosyl-S-NovH in the novobiocin biosynthesis pathway. Novobiocin is an aminocoumarin family antibiotic that targets bacterial DNA gyrases. This chain is Short-chain reductase protein NovJ (novJ), found in Streptomyces niveus (Streptomyces spheroides).